Consider the following 326-residue polypeptide: tRNA N6-adenosine threonylcarbamoyltransferase (326 aa).

Fe cation-binding residues include His-113 and His-117. Substrate contacts are provided by residues 134 to 138 (VASGG), Asp-167, Gly-180, and Asn-267. A Fe cation-binding site is contributed by Asp-291.

This sequence belongs to the KAE1 / TsaD family. The cofactor is Fe(2+).

It localises to the cytoplasm. The enzyme catalyses L-threonylcarbamoyladenylate + adenosine(37) in tRNA = N(6)-L-threonylcarbamoyladenosine(37) in tRNA + AMP + H(+). Required for the formation of a threonylcarbamoyl group on adenosine at position 37 (t(6)A37) in tRNAs that read codons beginning with adenine. Is involved in the transfer of the threonylcarbamoyl moiety of threonylcarbamoyl-AMP (TC-AMP) to the N6 group of A37, together with TsaE and TsaB. TsaD likely plays a direct catalytic role in this reaction. The chain is tRNA N6-adenosine threonylcarbamoyltransferase from Thermus thermophilus (strain ATCC 27634 / DSM 579 / HB8).